The following is a 107-amino-acid chain: Ubiquitin-related modifier 1 (107 aa).

Residue glycine 107 is modified to 1-thioglycine. Glycine 107 participates in a covalent cross-link: Glycyl lysine isopeptide (Gly-Lys) (interchain with K-? in acceptor proteins).

Belongs to the URM1 family. C-terminal thiocarboxylation occurs in 2 steps, it is first acyl-adenylated (-COAMP) via the hesA/moeB/thiF part of UBA4, then thiocarboxylated (-COSH) via the rhodanese domain of UBA4.

Its subcellular location is the cytoplasm. Its pathway is tRNA modification; 5-methoxycarbonylmethyl-2-thiouridine-tRNA biosynthesis. Functionally, acts as a sulfur carrier required for 2-thiolation of mcm(5)S(2)U at tRNA wobble positions of cytosolic tRNA(Lys), tRNA(Glu) and tRNA(Gln). Serves as sulfur donor in tRNA 2-thiolation reaction by being thiocarboxylated (-COSH) at its C-terminus by the MOCS3 homolog UBA4. The sulfur is then transferred to tRNA to form 2-thiolation of mcm(5)S(2)U. Prior mcm(5) tRNA modification by the elongator complex is required for 2-thiolation. Also acts as a ubiquitin-like protein (UBL) that is covalently conjugated via an isopeptide bond to lysine residues of target proteins such as AHP1. The thiocarboxylated form serves as substrate for conjugation and oxidative stress specifically induces the formation of UBL-protein conjugates. The polypeptide is Ubiquitin-related modifier 1 (Mycosarcoma maydis (Corn smut fungus)).